We begin with the raw amino-acid sequence, 289 residues long: Oxygen-dependent coproporphyrinogen-III oxidase (289 aa).

Ser-82 provides a ligand contact to substrate. The a divalent metal cation site is built by His-86 and His-96. The active-site Proton donor is the His-96. 98–100 (NYR) contributes to the substrate binding site. 2 residues coordinate a divalent metal cation: His-130 and His-160. An important for dimerization region spans residues 224-259 (YVEFNLVWDRGTIFGLQTNGRIESILMSMPPLVRWE).

It belongs to the aerobic coproporphyrinogen-III oxidase family. Homodimer. Requires a divalent metal cation as cofactor.

It is found in the cytoplasm. It catalyses the reaction coproporphyrinogen III + O2 + 2 H(+) = protoporphyrinogen IX + 2 CO2 + 2 H2O. The protein operates within porphyrin-containing compound metabolism; protoporphyrin-IX biosynthesis; protoporphyrinogen-IX from coproporphyrinogen-III (O2 route): step 1/1. In terms of biological role, involved in the heme and chlorophyll biosynthesis. Catalyzes the aerobic oxidative decarboxylation of propionate groups of rings A and B of coproporphyrinogen-III to yield the vinyl groups in protoporphyrinogen-IX. The polypeptide is Oxygen-dependent coproporphyrinogen-III oxidase (Gloeobacter violaceus (strain ATCC 29082 / PCC 7421)).